Reading from the N-terminus, the 511-residue chain is 2,3-bisphosphoglycerate-independent phosphoglycerate mutase (511 aa).

Mn(2+) is bound by residues aspartate 14 and serine 64. The Phosphoserine intermediate role is filled by serine 64. Substrate-binding positions include histidine 125, 155-156 (RD), arginine 187, arginine 193, 259-262 (RADR), and lysine 333. Aspartate 400, histidine 404, aspartate 441, histidine 442, and histidine 460 together coordinate Mn(2+).

Belongs to the BPG-independent phosphoglycerate mutase family. Monomer. The cofactor is Mn(2+).

The catalysed reaction is (2R)-2-phosphoglycerate = (2R)-3-phosphoglycerate. Its pathway is carbohydrate degradation; glycolysis; pyruvate from D-glyceraldehyde 3-phosphate: step 3/5. In terms of biological role, catalyzes the interconversion of 2-phosphoglycerate and 3-phosphoglycerate. In Pseudomonas putida (strain ATCC 47054 / DSM 6125 / CFBP 8728 / NCIMB 11950 / KT2440), this protein is 2,3-bisphosphoglycerate-independent phosphoglycerate mutase.